The following is a 357-amino-acid chain: Arginine kinase (357 aa).

The Phosphagen kinase N-terminal domain maps to 9 to 91 (KLEAGFKKLQ…FDPIIDDYHG (83 aa)). Residue 64–68 (GVGIY) participates in substrate binding. The region spanning 119–356 (FIISTRVRCG…LEMIKMEKAA (238 aa)) is the Phosphagen kinase C-terminal domain. Residues 122-126 (STRVR) and histidine 185 contribute to the ATP site. Glutamate 225 is a binding site for substrate. Residue arginine 229 coordinates ATP. Substrate is bound at residue cysteine 271. ATP contacts are provided by residues 280–284 (RASVH) and 309–314 (RGTRGE). Residue glutamate 314 participates in substrate binding.

The protein belongs to the ATP:guanido phosphotransferase family. Monomer.

Its subcellular location is the cytoplasm. The enzyme catalyses L-arginine + ATP = N(omega)-phospho-L-arginine + ADP + H(+). Its function is as follows. Catalyzes the reversible transfer of the terminal phosphoryl group of ATP to L-arginine. This chain is Arginine kinase, found in Limulus polyphemus (Atlantic horseshoe crab).